Here is a 257-residue protein sequence, read N- to C-terminus: Outer dense fiber protein 4 (257 aa).

Residues 1–41 are disordered; the sequence is MDAEYSGNEFPRSEGERDQHQRPGKERKSGEAGWGTGELGQ. Basic and acidic residues predominate over residues 11–30; that stretch reads PRSEGERDQHQRPGKERKSG. A Phosphoserine modification is found at serine 64. 3 helical membrane passes run 80 to 100, 152 to 172, and 179 to 199; these read AQVL…VVAF, VTFI…FELE, and IGWS…CAIL.

As to expression, expressed in testis and sperm; especially localized to sperm tail (at protein level).

Its subcellular location is the membrane. Its function is as follows. Component of the outer dense fibers (ODF) of spermatozoa which could be involved in sperm tail structure, sperm movement and general organization of cellular cytoskeleton. The sequence is that of Outer dense fiber protein 4 (ODF4) from Homo sapiens (Human).